We begin with the raw amino-acid sequence, 166 residues long: Probable histone deacetylase complex subunit SAP18 (166 aa).

Positions glycine 143–arginine 166 are disordered. The segment covering asparagine 147–arginine 158 has biased composition (basic and acidic residues).

The protein belongs to the SAP18 family. Interacts with SIN3 and histone deacetylase.

Its function is as follows. Acts in transcription repression. Involved in the tethering of the SIN3 complex to core histone proteins. The protein is Probable histone deacetylase complex subunit SAP18 of Caenorhabditis elegans.